We begin with the raw amino-acid sequence, 350 residues long: Ferredoxin--NADP reductase (350 aa).

Residues Thr22, Glu41, Gln49, Tyr54, Val94, Phe129, Asp295, and Ser336 each coordinate FAD.

This sequence belongs to the ferredoxin--NADP reductase type 2 family. In terms of assembly, homodimer. Requires FAD as cofactor.

It carries out the reaction 2 reduced [2Fe-2S]-[ferredoxin] + NADP(+) + H(+) = 2 oxidized [2Fe-2S]-[ferredoxin] + NADPH. The chain is Ferredoxin--NADP reductase from Chlorobium luteolum (strain DSM 273 / BCRC 81028 / 2530) (Pelodictyon luteolum).